We begin with the raw amino-acid sequence, 306 residues long: Acetyl-coenzyme A carboxylase carboxyl transferase subunit beta (306 aa).

The region spanning 25-294 (LWIKDPTSGE…VVNPSNTSST (270 aa)) is the CoA carboxyltransferase N-terminal domain. Residues 287 to 296 (NPSNTSSTNS) are compositionally biased toward low complexity. The disordered stretch occupies residues 287–306 (NPSNTSSTNSQASLSKAEAA).

This sequence belongs to the AccD/PCCB family. In terms of assembly, acetyl-CoA carboxylase is a heterohexamer composed of biotin carboxyl carrier protein (AccB), biotin carboxylase (AccC) and two subunits each of ACCase subunit alpha (AccA) and ACCase subunit beta (AccD).

It is found in the cytoplasm. It carries out the reaction N(6)-carboxybiotinyl-L-lysyl-[protein] + acetyl-CoA = N(6)-biotinyl-L-lysyl-[protein] + malonyl-CoA. The protein operates within lipid metabolism; malonyl-CoA biosynthesis; malonyl-CoA from acetyl-CoA: step 1/1. Functionally, component of the acetyl coenzyme A carboxylase (ACC) complex. Biotin carboxylase (BC) catalyzes the carboxylation of biotin on its carrier protein (BCCP) and then the CO(2) group is transferred by the transcarboxylase to acetyl-CoA to form malonyl-CoA. The polypeptide is Acetyl-coenzyme A carboxylase carboxyl transferase subunit beta (Bartonella henselae (strain ATCC 49882 / DSM 28221 / CCUG 30454 / Houston 1) (Rochalimaea henselae)).